We begin with the raw amino-acid sequence, 1132 residues long: Ubiquitin-associated protein 2 (1132 aa).

The tract at residues 1–29 (MMTSVSNDRCRGAREKPQMPTAHAAQSQK) is disordered. Residues 8-17 (DRCRGAREKP) are compositionally biased toward basic and acidic residues. The UBA domain maps to 48-92 (KNDSDFEAKVKQLMEVTGKNQDECIVALHDCNGDVNKAINILLEG). 10 disordered regions span residues 95-202 (DTTS…YSES), 221-248 (GTDEGPEGLAKSHSMSQEPPSKSSYGLK), 331-351 (NNQMAPGTANSTSASSYSPQS), 380-479 (LKPP…STVS), 602-679 (TSSA…VSTL), 713-749 (PLSQLSSSLSGHQNSMTSAHATRSTSTPHTHASVEST), 875-919 (PYSG…LNPG), 996-1033 (GGYGGSSQAPNKSTGSGPGKGVSVSSGTGLPDMTGSVY), 1040-1059 (DKQGFHAGTPPPFSLPSALG), and 1087-1132 (PHSQ…YWTN). The segment covering 109 to 130 (FGRESSENKENREKRTEREASR) has biased composition (basic and acidic residues). Residue Arg166 is modified to Omega-N-methylarginine. Residues 168-182 (KRARGRGFGRGRGRG) show a composition bias toward basic residues. Composition is skewed to polar residues over residues 233-244 (HSMSQEPPSKSS) and 331-340 (NNQMAPGTAN). Over residues 341–351 (STSASSYSPQS) the composition is skewed to low complexity. Residues 392–404 (SSAQQNDTASPPA) are compositionally biased toward polar residues. A phosphoserine mark is found at Ser433 and Ser440. Composition is skewed to low complexity over residues 436–448 (LSQLSQRQQHQTQ) and 602–618 (TSSALSSTSPVTTSSSY). Polar residues predominate over residues 619-630 (DQSSVHTRIAYQ). Ser631 carries the phosphoserine modification. Low complexity predominate over residues 631–644 (SSASPPDSAPGSVA). Residues 652–662 (SQHTVDTTSSV) show a composition bias toward polar residues. Positions 713–722 (PLSQLSSSLS) are enriched in low complexity. Polar residues predominate over residues 723–742 (GHQNSMTSAHATRSTSTPHT). The segment covering 897–914 (PAQAQQSQSQTHHTAQQP) has biased composition (low complexity). Positions 1101–1115 (PSGSGQRSQPSSLQP) are enriched in low complexity. Over residues 1116–1132 (KSQASKPTYGSAPYWTN) the composition is skewed to polar residues.

As to quaternary structure, may interact with ANXA2.

It is found in the nucleus. Its subcellular location is the chromosome. The protein localises to the cytoplasm. Recruits the ubiquitination machinery to RNA polymerase II for polyubiquitination, removal and degradation, when the transcription-coupled nucleotide excision repair (TC-NER) machinery fails to resolve DNA damage. May promote the degradation of ANXA2. This is Ubiquitin-associated protein 2 from Mus musculus (Mouse).